The chain runs to 718 residues: Polyribonucleotide nucleotidyltransferase (718 aa).

Asp-497 and Asp-503 together coordinate Mg(2+). A KH domain is found at 564–623 (PRLLTMKIDPEQIGLVIGPGGKTIKGITEQTGSKIDIADDGTVTIAALEAEKAEKAKQII). The 69-residue stretch at 633–701 (GEVYMGRVTR…AKGRLNLTRL (69 aa)) folds into the S1 motif domain.

This sequence belongs to the polyribonucleotide nucleotidyltransferase family. Requires Mg(2+) as cofactor.

The protein localises to the cytoplasm. The catalysed reaction is RNA(n+1) + phosphate = RNA(n) + a ribonucleoside 5'-diphosphate. Involved in mRNA degradation. Catalyzes the phosphorolysis of single-stranded polyribonucleotides processively in the 3'- to 5'-direction. This Rippkaea orientalis (strain PCC 8801 / RF-1) (Cyanothece sp. (strain PCC 8801)) protein is Polyribonucleotide nucleotidyltransferase.